Here is a 139-residue protein sequence, read N- to C-terminus: Ribosome-binding factor A (139 aa).

The protein belongs to the RbfA family. As to quaternary structure, monomer. Binds 30S ribosomal subunits, but not 50S ribosomal subunits or 70S ribosomes.

Its subcellular location is the cytoplasm. One of several proteins that assist in the late maturation steps of the functional core of the 30S ribosomal subunit. Associates with free 30S ribosomal subunits (but not with 30S subunits that are part of 70S ribosomes or polysomes). Required for efficient processing of 16S rRNA. May interact with the 5'-terminal helix region of 16S rRNA. The chain is Ribosome-binding factor A from Methylobacterium sp. (strain 4-46).